Consider the following 517-residue polypeptide: 2-isopropylmalate synthase (517 aa).

The region spanning 7–269 (VIIFDTTLRD…ETGIDTTQIV (263 aa)) is the Pyruvate carboxyltransferase domain. Mn(2+) is bound by residues Asp16, His204, His206, and Asn240. The tract at residues 366-517 (LADKKREIFD…KPKAQGSGTI (152 aa)) is required for the condensation reaction. Not required to bind substrate. Residues 395-517 (KFISQKISTE…KPKAQGSGTI (123 aa)) form a regulatory domain region.

It belongs to the alpha-IPM synthase/homocitrate synthase family. LeuA type 1 subfamily. In terms of assembly, homodimer. Remains a homodimer in the presence of L-leucine. Mn(2+) is required as a cofactor.

It is found in the cytoplasm. It catalyses the reaction 3-methyl-2-oxobutanoate + acetyl-CoA + H2O = (2S)-2-isopropylmalate + CoA + H(+). The protein operates within amino-acid biosynthesis; L-leucine biosynthesis; L-leucine from 3-methyl-2-oxobutanoate: step 1/4. Its activity is regulated as follows. Inhibited by 3-bromo substituents and Leu, the pathway end product. In terms of biological role, catalyzes the condensation of the acetyl group of acetyl-CoA with 3-methyl-2-oxobutanoate (2-ketoisovalerate) to form 3-carboxy-3-hydroxy-4-methylpentanoate (2-isopropylmalate). Complements an E.coli deletion. This Neisseria meningitidis serogroup B (strain ATCC BAA-335 / MC58) protein is 2-isopropylmalate synthase.